The sequence spans 903 residues: MTYELEQLGYKKQVCQKCGNTFWSIRERATCGDAPCDEYEFIGNPVTDKQYDLMGIQKKFKGFFKDHGHTPINRYPVLAKRWRNDVFLVGASIYDFQPWVTSGMVRPPANPLVVAQPSIRLNDVDNVGRTGRHMTCFTMGAHHAFNTDETPIYWKNETLRYCHEFLVSIGINPEEITYIESWWKGGGNEGPSFEICAHGVELATLVFIQYATTKDGLKEIPLKIVDTGYGLERIAWVSQGTPTAYDATFGSVIDKLTDISGVELNTEILSENARIAGMMDIEDISDLKLLRKKVADKLSLDPDMLKKTTAPMEAIYIVADHTRCLSFMLADGIIPSNVKEGYLARLVLRRTVKYMNELGLNESLSDIMKMQVDYLSKTYPEIKDNKDHIINITDLEEERYHTTLTKGKNLVKRSIKTLKKQNKKSFPTDMLINFYDSHGIPPETVEAISKENAFDANIPDNFYTQIAAAHEEEEEEEIEEMELNFPKTKLSFYDDLKQRTFTAKVLGVVDSNKIILNQTIYYPEGGGQPSDIGTITRVNGEVLNITYAQKVDGIVLHHVAKEDESKLDNIVGEEITGEIDSKRRDLLTRNHTATHLVIASAREVLGKHIWQAGAQKGLDKTRIDLSHYKRISHEEVQEIERLANKRVQENHPVNIQWYDRTDAEVKYGFKLYQGGIVPGKNIRVVEIPGIDVQACAGTHCEKTGDIGVIKLLRTERVQDGVERLEYAVSDSGIKKIQDDDDIIRNSSDVFGVDAEQLPRTCKRFFNEWKEQQKRIKSLEKQLAQVKIFSLENEIANINGYNVITEVLDVDNNQLREIAINLVEKEEVADIAILINNNGNIVASSNNKILEKGMKMGDVVNDIGKFLGGRGGGKPTLAQGAKMTDLSRKDEAFESVKEQIRSWN.

Zn(2+) is bound by residues histidine 591, histidine 595, cysteine 695, and histidine 699.

The protein belongs to the class-II aminoacyl-tRNA synthetase family. The cofactor is Zn(2+).

The protein resides in the cytoplasm. The catalysed reaction is tRNA(Ala) + L-alanine + ATP = L-alanyl-tRNA(Ala) + AMP + diphosphate. Its function is as follows. Catalyzes the attachment of alanine to tRNA(Ala) in a two-step reaction: alanine is first activated by ATP to form Ala-AMP and then transferred to the acceptor end of tRNA(Ala). Also edits incorrectly charged Ser-tRNA(Ala) and Gly-tRNA(Ala) via its editing domain. This Methanosphaera stadtmanae (strain ATCC 43021 / DSM 3091 / JCM 11832 / MCB-3) protein is Alanine--tRNA ligase.